The primary structure comprises 458 residues: ATP synthase subunit beta 2 (458 aa).

148–155 is a binding site for ATP; sequence GGAGVGKT.

This sequence belongs to the ATPase alpha/beta chains family. In terms of assembly, F-type ATPases have 2 components, CF(1) - the catalytic core - and CF(0) - the membrane proton channel. CF(1) has five subunits: alpha(3), beta(3), gamma(1), delta(1), epsilon(1). CF(0) has three main subunits: a(1), b(2) and c(9-12). The alpha and beta chains form an alternating ring which encloses part of the gamma chain. CF(1) is attached to CF(0) by a central stalk formed by the gamma and epsilon chains, while a peripheral stalk is formed by the delta and b chains.

It is found in the cell inner membrane. It carries out the reaction ATP + H2O + 4 H(+)(in) = ADP + phosphate + 5 H(+)(out). Functionally, produces ATP from ADP in the presence of a proton gradient across the membrane. The catalytic sites are hosted primarily by the beta subunits. The sequence is that of ATP synthase subunit beta 2 from Marinomonas sp. (strain MWYL1).